The following is a 673-amino-acid chain: UPF0313 protein blr7973 (673 aa).

In terms of domain architecture, Radical SAM core spans 332-611 (AWDMIKFSVT…KAFLRYHDPD (280 aa)). 3 residues coordinate [4Fe-4S] cluster: Cys346, Cys350, and Cys353. A disordered region spans residues 632–673 (RPDQLVPAHQPPGTGKAAGTRRPVRPGGKTQRFTTKGLRVMK).

Belongs to the UPF0313 family. The cofactor is [4Fe-4S] cluster.

The sequence is that of UPF0313 protein blr7973 from Bradyrhizobium diazoefficiens (strain JCM 10833 / BCRC 13528 / IAM 13628 / NBRC 14792 / USDA 110).